The chain runs to 471 residues: RuvB-like protein 2 (471 aa).

75 to 82 (GPPSTGKT) contributes to the ATP binding site.

This sequence belongs to the RuvB family. Probably forms a homohexamer. Interacts with RVB1 and may form heterododecamers with RVB1. Component of the SWR1 chromatin remodeling complex composed of at least ACT1, ARP4, RVB1, RVB2, ARP6, YAF9, VPS71, VPS72, SWC3, SWC4, SWC5, SWC7 and SWR1, and perhaps BDF1. Component of the chromatin-remodeling INO80 complex, at least composed of ARP4, ARP5, ARP8, RVB1, RVB2, TAF14, NHP10, IES1, IES3, IES4, IES6, ACT1, IES2, IES5 and INO80. Also belongs to the R2TP complex composed of at least RVB1, RVB2, TAH1 and PIH1. Interacts with SPT15/TBP.

It is found in the nucleus. The protein localises to the nucleoplasm. The catalysed reaction is ATP + H2O = ADP + phosphate + H(+). In terms of biological role, DNA helicase which participates in several chromatin remodeling complexes, including the SWR1 and the INO80 complexes. The SWR1 complex mediates the ATP-dependent exchange of histone H2A for the H2A variant HZT1 leading to transcriptional regulation of selected genes by chromatin remodeling. The INO80 complex remodels chromatin by shifting nucleosomes. Its ability to induce transcription of some phosphate-responsive genes is modulated by inositol polyphosphates. The INO80 complex is involved in DNA repair by associating to 'Ser-129' phosphorylated H2A histones as a response to DNA damage. During transcription may recruit SPT15/TBP to the TATA-boxes of involved genes. Required for box C/D and box H/ACA snoRNA accumulation and involved in pre-rRNA processing. The chain is RuvB-like protein 2 (RVB2) from Saccharomyces cerevisiae (strain ATCC 204508 / S288c) (Baker's yeast).